The sequence spans 388 residues: T-cell surface glycoprotein CD1e, membrane-associated (388 aa).

A signal peptide spans 1–19 (MLLLFLLFEGLCCPGENTA). Positions 20–31 (APQALQSYHLAA) are cleaved as a propeptide — removed in sCD1e. Residues Asn-47 and Asn-84 are each glycosylated (N-linked (GlcNAc...) asparagine). Residues 191–301 (PRFLAGLMEA…LGGHDLIIHW (111 aa)) form the Ig-like domain. A disulfide bond links Cys-230 and Cys-285. A helical transmembrane segment spans residues 305-325 (SIFLILICLTVIVTLVILVVV).

Heterodimer with B2M (beta-2-microglobulin). The association with B2M appears to be facilitated by the presence of the propeptide. Post-translationally, mono-ubiquitinated. In terms of processing, proteolytically cleaved in late endosomes to yield a soluble form. In terms of tissue distribution, expressed on cortical thymocytes, dendritic cells, Langerhans cells, on certain T-cell leukemias, and in various other tissues.

It is found in the golgi apparatus membrane. The protein localises to the early endosome. The protein resides in the late endosome. It localises to the lysosome lumen. Functionally, T-cell surface glycoprotein CD1e, soluble binds diacetylated lipids, including phosphatidyl inositides and diacylated sulfoglycolipids, and is required for the presentation of glycolipid antigens on the cell surface. The membrane-associated form is not active. In Homo sapiens (Human), this protein is T-cell surface glycoprotein CD1e, membrane-associated (CD1E).